Here is a 371-residue protein sequence, read N- to C-terminus: Probable diguanylate cyclase DgcC (371 aa).

Helical transmembrane passes span 46–66, 68–88, 112–132, 143–163, and 171–191; these read AVGL…HPPP, WWWL…WQIA, WVGV…IMCL, FVAG…LTGI, and PLEW…FGWV. Residues 240–371 enclose the GGDEF domain; sequence RDATLLIIDI…AGRNRTEVAA (132 aa). The Mg(2+) site is built by aspartate 248 and isoleucine 249. Positions 256 and 265 each coordinate substrate. Aspartate 291 lines the Mg(2+) pocket.

It depends on Mg(2+) as a cofactor.

It localises to the cell inner membrane. It catalyses the reaction 2 GTP = 3',3'-c-di-GMP + 2 diphosphate. The protein operates within purine metabolism; 3',5'-cyclic di-GMP biosynthesis. Its function is as follows. A probable diguanylate cyclase. The last member of a cascade of expressed proteins, its expression requires DgcM. DgcC production induces biosynthesis of cellulose in some E.coli isolates, but not in K12 strains. Cyclic-di-GMP is a second messenger which controls cell surface-associated traits in bacteria. The chain is Probable diguanylate cyclase DgcC from Escherichia coli (strain K12).